The primary structure comprises 697 residues: Protein arginine N-methyltransferase 7 (697 aa).

SAM-dependent MTase PRMT-type domains follow at residues 14 to 357 (QNTW…YSLW) and 366 to 697 (EQPA…EETK).

This sequence belongs to the class I-like SAM-binding methyltransferase superfamily. Protein arginine N-methyltransferase family. PRMT7 subfamily.

Its function is as follows. Essential arginine methyltransferase that can both catalyze the formation of omega-N monomethylarginine (MMA) and symmetrical dimethylarginine (sDMA). Specifically mediates the symmetrical dimethylation of arginine residues in the small nuclear ribonucleoproteins SmD1 and SmD3. The protein is Protein arginine N-methyltransferase 7 (Art7) of Drosophila virilis (Fruit fly).